Reading from the N-terminus, the 363-residue chain is MKLKLFLLSVLLLVSGSSQAQRIKDIANVQGVRSNQLIGYGLVVGLPGTGEKTTYTEQTFKTMLKNFGINLPDNLRPKIKNVAVVAVHAEMPAFIKPGQTLDVTVSSLGEAKSLRGGTLLQTFLKGVDGNVYAIAQGSMVVSGFSAEGLDGSKVIQNTPTVGRIPNGGIVERTVTTPFSTGDHLTFNLRRADFSTAKRLADAINELLGPGMARPLDAASVQVSAPRDVSQRVSFLATLENIQVEPASESAKVIVNSRTGTIVVGREVRLLPAAVTHGGLTVTIAEATQVSQPNPLAGGQTVVTADTTIDVAEEDSRMFLFNPGTTLDELVRAVNLVGAAPSDVLAILEALKMAGALHGELIII.

Positions 1–20 (MKLKLFLLSVLLLVSGSSQA) are cleaved as a signal peptide.

Belongs to the FlgI family. The basal body constitutes a major portion of the flagellar organelle and consists of four rings (L,P,S, and M) mounted on a central rod.

The protein resides in the periplasm. It localises to the bacterial flagellum basal body. Functionally, assembles around the rod to form the L-ring and probably protects the motor/basal body from shearing forces during rotation. This chain is Flagellar P-ring protein, found in Shewanella woodyi (strain ATCC 51908 / MS32).